Reading from the N-terminus, the 557-residue chain is Dihydroxy-acid dehydratase (557 aa).

Residue D78 participates in Mg(2+) binding. Position 119 (C119) interacts with [2Fe-2S] cluster. Residues D120 and K121 each coordinate Mg(2+). Residue K121 is modified to N6-carboxylysine. Residue C192 coordinates [2Fe-2S] cluster. Residue E443 participates in Mg(2+) binding. The active-site Proton acceptor is S469.

Belongs to the IlvD/Edd family. As to quaternary structure, homodimer. Requires [2Fe-2S] cluster as cofactor. Mg(2+) is required as a cofactor.

It catalyses the reaction (2R)-2,3-dihydroxy-3-methylbutanoate = 3-methyl-2-oxobutanoate + H2O. The catalysed reaction is (2R,3R)-2,3-dihydroxy-3-methylpentanoate = (S)-3-methyl-2-oxopentanoate + H2O. The protein operates within amino-acid biosynthesis; L-isoleucine biosynthesis; L-isoleucine from 2-oxobutanoate: step 3/4. It functions in the pathway amino-acid biosynthesis; L-valine biosynthesis; L-valine from pyruvate: step 3/4. In terms of biological role, functions in the biosynthesis of branched-chain amino acids. Catalyzes the dehydration of (2R,3R)-2,3-dihydroxy-3-methylpentanoate (2,3-dihydroxy-3-methylvalerate) into 2-oxo-3-methylpentanoate (2-oxo-3-methylvalerate) and of (2R)-2,3-dihydroxy-3-methylbutanoate (2,3-dihydroxyisovalerate) into 2-oxo-3-methylbutanoate (2-oxoisovalerate), the penultimate precursor to L-isoleucine and L-valine, respectively. This is Dihydroxy-acid dehydratase from Sulfurihydrogenibium sp. (strain YO3AOP1).